Here is a 139-residue protein sequence, read N- to C-terminus: Nucleoside diphosphate kinase (139 aa).

The ATP site is built by K11, F59, R87, T93, R104, and N114. Catalysis depends on H117, which acts as the Pros-phosphohistidine intermediate.

It belongs to the NDK family. In terms of assembly, homotetramer. The cofactor is Mg(2+).

The protein localises to the cytoplasm. It catalyses the reaction a 2'-deoxyribonucleoside 5'-diphosphate + ATP = a 2'-deoxyribonucleoside 5'-triphosphate + ADP. It carries out the reaction a ribonucleoside 5'-diphosphate + ATP = a ribonucleoside 5'-triphosphate + ADP. Functionally, major role in the synthesis of nucleoside triphosphates other than ATP. The ATP gamma phosphate is transferred to the NDP beta phosphate via a ping-pong mechanism, using a phosphorylated active-site intermediate. The protein is Nucleoside diphosphate kinase of Wolbachia pipientis subsp. Culex pipiens (strain wPip).